The sequence spans 411 residues: Serine/threonine-protein kinase 54 (411 aa).

S43 and S45 each carry phosphoserine; by PHOT1. Positions 108–385 (LIIKSVIARG…EEVVAMLEAI (278 aa)) constitute a Protein kinase domain. ATP contacts are provided by residues 114-122 (IARGTFGTV) and K135. The Proton acceptor role is filled by D253. The residue at position 286 (T286) is a Phosphothreonine.

The protein belongs to the protein kinase superfamily. Ser/Thr protein kinase family. As to quaternary structure, binds to CBC2. Associates with PHOT2, BLUS1 and PM H(+)-ATPase (e.g. AHA1). In terms of processing, autophosphorylated. Phosphorylated in guard cells by HT1 in response to low CO(2) concentrations and by PHOT1 after blue light (BL) exposure. Expressed in guard cells.

The protein localises to the cytoplasm. It is found in the cytosol. The catalysed reaction is L-seryl-[protein] + ATP = O-phospho-L-seryl-[protein] + ADP + H(+). The enzyme catalyses L-threonyl-[protein] + ATP = O-phospho-L-threonyl-[protein] + ADP + H(+). Serine/threonine protein kinase that phosphorylates proteins on serine and threonine residues. Collectively with CBC2, acts as a negative regulator of stomatal opening, probably via the inhibition of plasma membrane-type ATPases (AHA1 and AHA2) activity in guard cells, but in an abscisic acid (ABA)-independent manner. However, at low concentrations of CO(2), together with CBC2, stimulates stomatal opening via the inhibition of S-type anion channels in response to blue light (BL) and red light (RL), thus being a key component to maximize photosynthesis in the light under low CO(2) conditions. Required for temperature decrease in leaves. Downstream target of HIGH LEAF TEMPERATURE1 (HT1) during low CO(2)-induced stomatal opening. Also functions in the signaling pathways of phototropins. The protein is Serine/threonine-protein kinase 54 of Arabidopsis thaliana (Mouse-ear cress).